The primary structure comprises 79 residues: ATP synthase subunit c (79 aa).

Transmembrane regions (helical) follow at residues 11 to 31 and 53 to 73; these read MAAA…IGIL and FFIV…LGLY.

Belongs to the ATPase C chain family. In terms of assembly, F-type ATPases have 2 components, F(1) - the catalytic core - and F(0) - the membrane proton channel. F(1) has five subunits: alpha(3), beta(3), gamma(1), delta(1), epsilon(1). F(0) has three main subunits: a(1), b(2) and c(10-14). The alpha and beta chains form an alternating ring which encloses part of the gamma chain. F(1) is attached to F(0) by a central stalk formed by the gamma and epsilon chains, while a peripheral stalk is formed by the delta and b chains.

The protein resides in the cell inner membrane. Its function is as follows. F(1)F(0) ATP synthase produces ATP from ADP in the presence of a proton or sodium gradient. F-type ATPases consist of two structural domains, F(1) containing the extramembraneous catalytic core and F(0) containing the membrane proton channel, linked together by a central stalk and a peripheral stalk. During catalysis, ATP synthesis in the catalytic domain of F(1) is coupled via a rotary mechanism of the central stalk subunits to proton translocation. In terms of biological role, key component of the F(0) channel; it plays a direct role in translocation across the membrane. A homomeric c-ring of between 10-14 subunits forms the central stalk rotor element with the F(1) delta and epsilon subunits. The polypeptide is ATP synthase subunit c (Pectobacterium atrosepticum (strain SCRI 1043 / ATCC BAA-672) (Erwinia carotovora subsp. atroseptica)).